The chain runs to 884 residues: Alanine--tRNA ligase (884 aa).

Zn(2+) is bound by residues H565, H569, C675, and H679.

Belongs to the class-II aminoacyl-tRNA synthetase family. Requires Zn(2+) as cofactor.

It is found in the cytoplasm. The enzyme catalyses tRNA(Ala) + L-alanine + ATP = L-alanyl-tRNA(Ala) + AMP + diphosphate. Its function is as follows. Catalyzes the attachment of alanine to tRNA(Ala) in a two-step reaction: alanine is first activated by ATP to form Ala-AMP and then transferred to the acceptor end of tRNA(Ala). Also edits incorrectly charged Ser-tRNA(Ala) and Gly-tRNA(Ala) via its editing domain. This chain is Alanine--tRNA ligase, found in Maricaulis maris (strain MCS10) (Caulobacter maris).